The chain runs to 294 residues: Light-independent protochlorophyllide reductase iron-sulfur ATP-binding protein (294 aa).

ATP contacts are provided by residues 10 to 15 and lysine 39; that span reads GIGKST. Serine 14 serves as a coordination point for Mg(2+). [4Fe-4S] cluster is bound by residues cysteine 95 and cysteine 129. 180–181 lines the ATP pocket; sequence NR.

The protein belongs to the NifH/BchL/ChlL family. Homodimer. Protochlorophyllide reductase is composed of three subunits; ChlL, ChlN and ChlB. The cofactor is [4Fe-4S] cluster.

Its subcellular location is the plastid. The protein resides in the chloroplast. The enzyme catalyses chlorophyllide a + oxidized 2[4Fe-4S]-[ferredoxin] + 2 ADP + 2 phosphate = protochlorophyllide a + reduced 2[4Fe-4S]-[ferredoxin] + 2 ATP + 2 H2O. It participates in porphyrin-containing compound metabolism; chlorophyll biosynthesis (light-independent). In terms of biological role, component of the dark-operative protochlorophyllide reductase (DPOR) that uses Mg-ATP and reduced ferredoxin to reduce ring D of protochlorophyllide (Pchlide) to form chlorophyllide a (Chlide). This reaction is light-independent. The L component serves as a unique electron donor to the NB-component of the complex, and binds Mg-ATP. In Pleurastrum terricola (Filamentous green alga), this protein is Light-independent protochlorophyllide reductase iron-sulfur ATP-binding protein.